The sequence spans 1139 residues: GRIP and coiled-coil domain-containing protein (1139 aa).

Residues 366 to 388 form a disordered region; sequence NDDSQINNNVSNKVNSPDDDPNT. Over residues 369 to 380 the composition is skewed to polar residues; the sequence is SQINNNVSNKVN. Coiled coils occupy residues 472-648 and 758-877; these read VTKL…INNE and LYIL…ETQQ. The interval 1004-1024 is disordered; it reads NEQENDNNNNNNNNNNNNNVE. Residues 1009-1022 show a composition bias toward low complexity; that stretch reads DNNNNNNNNNNNNN. Residues 1043–1084 are a coiled coil; the sequence is YKKIRKKLETYEILLNEQQEGKKKMTEEINSLKNQVKNYESI. Residues 1084–1135 form the GRIP domain; it reads INGNYQHIIYQKNILSNFIAQIPSRIQVDDYVSVIFNSFNFSNQEIEAINIK.

This chain is GRIP and coiled-coil domain-containing protein, found in Plasmodium falciparum (isolate 3D7).